A 332-amino-acid chain; its full sequence is Geranylgeranyl pyrophosphate synthase dpasD (332 aa).

3 residues coordinate isopentenyl diphosphate: lysine 55, arginine 58, and histidine 87. Residues aspartate 94 and aspartate 98 each contribute to the Mg(2+) site. Residue arginine 103 participates in dimethylallyl diphosphate binding. Arginine 104 provides a ligand contact to isopentenyl diphosphate. The dimethylallyl diphosphate site is built by lysine 181, threonine 182, and glutamine 215. Aspartate 218 is a binding site for Mg(2+). The dimethylallyl diphosphate site is built by asparagine 222, lysine 232, and lysine 242.

Belongs to the FPP/GGPP synthase family. Requires Mg(2+) as cofactor.

The catalysed reaction is isopentenyl diphosphate + dimethylallyl diphosphate = (2E)-geranyl diphosphate + diphosphate. It catalyses the reaction isopentenyl diphosphate + (2E)-geranyl diphosphate = (2E,6E)-farnesyl diphosphate + diphosphate. The enzyme catalyses isopentenyl diphosphate + (2E,6E)-farnesyl diphosphate = (2E,6E,10E)-geranylgeranyl diphosphate + diphosphate. It participates in secondary metabolite biosynthesis; terpenoid biosynthesis. Its function is as follows. Geranylgeranyl pyrophosphate synthase; part of the gene cluster that mediates the biosynthesis of the diterpenoid pyrones subglutinols A and B. The first step of the pathway is the synthesis of the alpha-pyrone moiety by the polyketide synthase dpasA via condensation of one acetyl-CoA starter unit with 3 malonyl-CoA units and 2 methylations. The alpha-pyrone is then combined with geranylgeranyl pyrophosphate (GGPP) formed by the GGPP synthase dpasD through the action of the prenyltransferase dpasC to yield a linear alpha-pyrone diterpenoid. Subsequent steps in the diterpenoid pyrone biosynthetic pathway involve the decalin core formation, which is initiated by the epoxidation of the C10-C11 olefin by the FAD-dependent oxidoreductase dpasE, and is followed by a cyclization cascade catalyzed by the terpene cyclase dpasB. The FAD-linked oxidoreductase dpasF is then involved in tetrahydrofuran (THF) ring formation at the C5 unit to complete the formation of subglutinols A and B. DpasF also possesses an additional catalytic ability of multi-step oxidations to generate a new DDP analog with an enone system at the C5 named FDDP A. In Apiospora sacchari (Arthrinium sacchari), this protein is Geranylgeranyl pyrophosphate synthase dpasD.